The chain runs to 520 residues: Keratin, type II cytoskeletal 72 (520 aa).

Positions 1-133 are head; that stretch reads MSRQLTLYPG…DPEIQKVRAQ (133 aa). Residues 134–169 form a coil 1A region; it reads EREQIKALNNKFASFIDKVRFLEQQNQVLETKWELL. The region spanning 134–447 is the IF rod domain; sequence EREQIKALNN…KLLESEESRM (314 aa). Positions 170–188 are linker 1; it reads QQLDLNNSKRSLEPVHESY. A coil 1B region spans residues 189-280; that stretch reads ISNLQKQLEI…VLFEGEIAQM (92 aa). Positions 281–304 are linker 12; that stretch reads QSHISDTSVILSMDNNRQLDLDSI. The interval 305–443 is coil 2; sequence LAEVRAQYEE…ATYRKLLESE (139 aa). The tail stretch occupies residues 444–520; the sequence is ESRMAGEYPN…SSGTTKKTSR (77 aa). The disordered stretch occupies residues 494–520; the sequence is KGSCGSELKDPPAKTSGSSGTTKKTSR. Positions 507-520 are enriched in low complexity; sequence KTSGSSGTTKKTSR.

The protein belongs to the intermediate filament family. Heterotetramer of two type I and two type II keratins.

Functionally, has a role in hair formation. Specific component of keratin intermediate filaments in the inner root sheath (IRS) of the hair follicle. This chain is Keratin, type II cytoskeletal 72 (Krt72), found in Mus musculus (Mouse).